We begin with the raw amino-acid sequence, 362 residues long: Protein BIG GRAIN 1-like D (362 aa).

3 disordered regions span residues 22-113, 132-168, and 303-327; these read IDPK…TLFH, KFNRHDENWENTRNRRSVKSSGNQKKPKTPASPGGRI, and VKTNGFEDYEDDDEDDDDDDVASDS. The span at 23–47 shows a compositional bias: polar residues; that stretch reads DPKTQKTQPYVGSVNTTTKKQSIVT. The segment covering 50–60 has biased composition (basic and acidic residues); that stretch reads VPDRKIHRDRF. The segment covering 63 to 78 has biased composition (low complexity); sequence SVSSSSDSNSSIFSSS. Positions 132–144 are enriched in basic and acidic residues; sequence KFNRHDENWENTR. Over residues 309-324 the composition is skewed to acidic residues; the sequence is EDYEDDDEDDDDDDVA.

This sequence belongs to the BIG GRAIN 1 (BG1) plant protein family.

Its subcellular location is the cell membrane. Its function is as follows. Involved in auxin transport. Regulator of the auxin signaling pathway. The sequence is that of Protein BIG GRAIN 1-like D from Arabidopsis thaliana (Mouse-ear cress).